We begin with the raw amino-acid sequence, 346 residues long: Holliday junction branch migration complex subunit RuvB (346 aa).

The interval 1–182 (MSEPARLISP…FGIPVRLSFY (182 aa)) is large ATPase domain (RuvB-L). ATP is bound by residues Leu21, Arg22, Gly63, Lys66, Thr67, Thr68, 129 to 131 (EDF), Arg172, Tyr182, and Arg219. Mg(2+) is bound at residue Thr67. Residues 183–253 (TVEELELIVR…IADEALTRLL (71 aa)) are small ATPAse domain (RuvB-S). The segment at 256-346 (NVGFDQLDKR…AQFRLFQEDN (91 aa)) is head domain (RuvB-H). Positions 292, 311, and 316 each coordinate DNA.

Belongs to the RuvB family. As to quaternary structure, homohexamer. Forms an RuvA(8)-RuvB(12)-Holliday junction (HJ) complex. HJ DNA is sandwiched between 2 RuvA tetramers; dsDNA enters through RuvA and exits via RuvB. An RuvB hexamer assembles on each DNA strand where it exits the tetramer. Each RuvB hexamer is contacted by two RuvA subunits (via domain III) on 2 adjacent RuvB subunits; this complex drives branch migration. In the full resolvosome a probable DNA-RuvA(4)-RuvB(12)-RuvC(2) complex forms which resolves the HJ.

It localises to the cytoplasm. The catalysed reaction is ATP + H2O = ADP + phosphate + H(+). Functionally, the RuvA-RuvB-RuvC complex processes Holliday junction (HJ) DNA during genetic recombination and DNA repair, while the RuvA-RuvB complex plays an important role in the rescue of blocked DNA replication forks via replication fork reversal (RFR). RuvA specifically binds to HJ cruciform DNA, conferring on it an open structure. The RuvB hexamer acts as an ATP-dependent pump, pulling dsDNA into and through the RuvAB complex. RuvB forms 2 homohexamers on either side of HJ DNA bound by 1 or 2 RuvA tetramers; 4 subunits per hexamer contact DNA at a time. Coordinated motions by a converter formed by DNA-disengaged RuvB subunits stimulates ATP hydrolysis and nucleotide exchange. Immobilization of the converter enables RuvB to convert the ATP-contained energy into a lever motion, pulling 2 nucleotides of DNA out of the RuvA tetramer per ATP hydrolyzed, thus driving DNA branch migration. The RuvB motors rotate together with the DNA substrate, which together with the progressing nucleotide cycle form the mechanistic basis for DNA recombination by continuous HJ branch migration. Branch migration allows RuvC to scan DNA until it finds its consensus sequence, where it cleaves and resolves cruciform DNA. The protein is Holliday junction branch migration complex subunit RuvB of Rhizobium johnstonii (strain DSM 114642 / LMG 32736 / 3841) (Rhizobium leguminosarum bv. viciae).